Here is a 271-residue protein sequence, read N- to C-terminus: Phosphatidylinositol transfer protein beta isoform (271 aa).

An N6-acetyllysine modification is found at lysine 215. A Phosphoserine modification is found at serine 262.

This sequence belongs to the PtdIns transfer protein family. PI transfer class I subfamily. In terms of processing, constitutive phosphorylation of Ser-262 has no effect on phospholipid transfer activity but is required for Golgi targeting.

It is found in the golgi apparatus. The protein resides in the golgi apparatus membrane. Its subcellular location is the endoplasmic reticulum membrane. The catalysed reaction is a 1,2-diacyl-sn-glycero-3-phosphocholine(in) = a 1,2-diacyl-sn-glycero-3-phosphocholine(out). It catalyses the reaction a 1,2-diacyl-sn-glycero-3-phospho-(1D-myo-inositol)(in) = a 1,2-diacyl-sn-glycero-3-phospho-(1D-myo-inositol)(out). The enzyme catalyses an N-(acyl)-sphingosylphosphocholine(in) = an N-(acyl)-sphingosylphosphocholine(out). In terms of biological role, catalyzes the transfer of phosphatidylinositol, phosphatidylcholine and sphingomyelin between membranes. Required for COPI-mediated retrograde transport from the Golgi to the endoplasmic reticulum; phosphatidylinositol and phosphatidylcholine transfer activity is essential for this function. The sequence is that of Phosphatidylinositol transfer protein beta isoform (PITPNB) from Bos taurus (Bovine).